The primary structure comprises 114 residues: Large ribosomal subunit protein bL19 (114 aa).

The protein belongs to the bacterial ribosomal protein bL19 family.

Its function is as follows. This protein is located at the 30S-50S ribosomal subunit interface and may play a role in the structure and function of the aminoacyl-tRNA binding site. The chain is Large ribosomal subunit protein bL19 from Halalkalibacterium halodurans (strain ATCC BAA-125 / DSM 18197 / FERM 7344 / JCM 9153 / C-125) (Bacillus halodurans).